Reading from the N-terminus, the 276-residue chain is Diaminopimelate epimerase (276 aa).

3 residues coordinate substrate: Asn-13, Gln-46, and Asn-66. Residue Cys-75 is the Proton donor of the active site. Residues 76 to 77 (GN), Asn-159, Asn-192, and 210 to 211 (ER) contribute to the substrate site. Cys-219 acts as the Proton acceptor in catalysis. 220–221 (GS) lines the substrate pocket.

The protein belongs to the diaminopimelate epimerase family. As to quaternary structure, homodimer.

It is found in the cytoplasm. It carries out the reaction (2S,6S)-2,6-diaminopimelate = meso-2,6-diaminopimelate. It participates in amino-acid biosynthesis; L-lysine biosynthesis via DAP pathway; DL-2,6-diaminopimelate from LL-2,6-diaminopimelate: step 1/1. Catalyzes the stereoinversion of LL-2,6-diaminopimelate (L,L-DAP) to meso-diaminopimelate (meso-DAP), a precursor of L-lysine and an essential component of the bacterial peptidoglycan. This is Diaminopimelate epimerase from Vibrio vulnificus (strain CMCP6).